A 336-amino-acid chain; its full sequence is Nucleoid-associated protein ECA2747 (336 aa).

The disordered stretch occupies residues 317–336 (KGTPPNLRDQLQRRTSGGKQ).

It belongs to the YejK family.

The protein localises to the cytoplasm. The protein resides in the nucleoid. The protein is Nucleoid-associated protein ECA2747 of Pectobacterium atrosepticum (strain SCRI 1043 / ATCC BAA-672) (Erwinia carotovora subsp. atroseptica).